Here is a 65-residue protein sequence, read N- to C-terminus: Metallothionein-3 (65 aa).

N-acetylmethionine is present on Met-1. The beta stretch occupies residues 1–30; it reads MDPEACPCPTGGSCTCSDSCKCEGCTCASS. The a divalent metal cation site is built by Cys-6, Cys-8, Cys-14, Cys-16, Cys-20, Cys-22, Cys-25, and Cys-27. The tract at residues 31–65 is alpha; sequence KKSCCPAECEKCAKDCVCKGGEGAEAEEKKCGCCQ. Ser-33 carries the post-translational modification Phosphoserine. Residues Cys-34, Cys-35, Cys-39, Cys-42, Cys-46, Cys-48, Cys-61, Cys-63, and Cys-64 each contribute to the a divalent metal cation site.

Belongs to the metallothionein superfamily. Type 1 family.

In terms of biological role, binds heavy metals. Contains five zinc and one copper atoms per polypeptide chain and only a negligible amount of cadmium. This is Metallothionein-3 (MT3) from Ovis aries (Sheep).